Here is a 356-residue protein sequence, read N- to C-terminus: tRNA N6-adenosine threonylcarbamoyltransferase (356 aa).

Fe cation-binding residues include His115 and His119. Residues 138–142 (LVSGG), Asp171, Gly184, and Asn283 contribute to the substrate site. Asp311 contributes to the Fe cation binding site.

The protein belongs to the KAE1 / TsaD family. Fe(2+) serves as cofactor.

The protein localises to the cytoplasm. It catalyses the reaction L-threonylcarbamoyladenylate + adenosine(37) in tRNA = N(6)-L-threonylcarbamoyladenosine(37) in tRNA + AMP + H(+). Its function is as follows. Required for the formation of a threonylcarbamoyl group on adenosine at position 37 (t(6)A37) in tRNAs that read codons beginning with adenine. Is involved in the transfer of the threonylcarbamoyl moiety of threonylcarbamoyl-AMP (TC-AMP) to the N6 group of A37, together with TsaE and TsaB. TsaD likely plays a direct catalytic role in this reaction. The protein is tRNA N6-adenosine threonylcarbamoyltransferase of Prochlorococcus marinus (strain MIT 9515).